Reading from the N-terminus, the 85-residue chain is Contulakin-Lt2 (85 aa).

An N-terminal signal peptide occupies residues Met-1–Gly-22. Residues Arg-23–Lys-61 constitute a propeptide that is removed on maturation. A disulfide bridge connects residues Cys-65 and Cys-70. Residues Arg-76 to Lys-85 constitute a propeptide that is removed on maturation.

The protein belongs to the conotoxin C superfamily. Expressed by the venom duct.

Its subcellular location is the secreted. Acts as an agonist of neurotensin receptors. It binds to human neurotensin type 1 receptor (NTSR1), rat neurotensin types 1 and 2 receptors (NTSR1/NTSR2) and mouse neurotensin type 3 receptor (SORT1). This Conus litteratus (Lettered cone) protein is Contulakin-Lt2.